A 155-amino-acid chain; its full sequence is 6,7-dimethyl-8-ribityllumazine synthase (155 aa).

Residues Tyr23, 57–59 (AWE), and 81–83 (CVI) contribute to the 5-amino-6-(D-ribitylamino)uracil site. A (2S)-2-hydroxy-3-oxobutyl phosphate-binding site is contributed by 86–87 (ET). Catalysis depends on His89, which acts as the Proton donor. Phe114 contacts 5-amino-6-(D-ribitylamino)uracil. Residue Arg128 coordinates (2S)-2-hydroxy-3-oxobutyl phosphate.

It belongs to the DMRL synthase family.

It catalyses the reaction (2S)-2-hydroxy-3-oxobutyl phosphate + 5-amino-6-(D-ribitylamino)uracil = 6,7-dimethyl-8-(1-D-ribityl)lumazine + phosphate + 2 H2O + H(+). It functions in the pathway cofactor biosynthesis; riboflavin biosynthesis; riboflavin from 2-hydroxy-3-oxobutyl phosphate and 5-amino-6-(D-ribitylamino)uracil: step 1/2. Functionally, catalyzes the formation of 6,7-dimethyl-8-ribityllumazine by condensation of 5-amino-6-(D-ribitylamino)uracil with 3,4-dihydroxy-2-butanone 4-phosphate. This is the penultimate step in the biosynthesis of riboflavin. In Rhodopirellula baltica (strain DSM 10527 / NCIMB 13988 / SH1), this protein is 6,7-dimethyl-8-ribityllumazine synthase.